Here is a 280-residue protein sequence, read N- to C-terminus: Nocamycin O-methyltransferase (280 aa).

Belongs to the methyltransferase superfamily.

The enzyme catalyses nocamycin E + S-adenosyl-L-methionine = nocamycin I + S-adenosyl-L-homocysteine. It functions in the pathway antibiotic biosynthesis. Involved in the biosynthesis of nocamycin I and nocamycin II. Catalyzes the methylation of nocamycin E to yield nocamycin I. This is Nocamycin O-methyltransferase from Saccharothrix syringae (Nocardiopsis syringae).